Consider the following 85-residue polypeptide: UPF0181 protein YE1782 (85 aa).

2 disordered regions span residues 1 to 22 and 57 to 85; these read MLAG…RIHQ and DTDF…PYEG. Over residues 9–21 the composition is skewed to basic and acidic residues; sequence SHEEQQEAVERIH. Acidic residues predominate over residues 74–85; sequence QDADEIEDPYEG.

It belongs to the UPF0181 family.

This chain is UPF0181 protein YE1782, found in Yersinia enterocolitica serotype O:8 / biotype 1B (strain NCTC 13174 / 8081).